The primary structure comprises 365 residues: MPSTTQTTVQSIDSIDSIPTTIKRRQNDKTKTPKTKPVSKIPICPKNSSIPRLDQPSQHKFILLQSLLPITVHQLTTLVLSISRYDDYVHPFLLRLCVIIGYGYAFRFLLRREGLAIRTLGKKLGYLDGDHHPRDKVPRDSTRLNWSLPLTVGSRTVMCVLVAYDPSQQPINYLASLKWWAWLAVYLSLYPIILDFYYYCVHRAWHEVPCLWRFHRRHHTIKRPSILFTAYADSEQELFDIVGTPLLTFFTLKALHLPMDFYTWWICIQYIAYTEVMGHSGLRIYTTPPISCSWLLQRFGVELVIEDHDLHHRQGYRQARNYGKQTRIWDRLFGTCADRIETNPVNIQKGRRVMMHSINIPSLGN.

Residues 20–41 form a disordered region; the sequence is TTIKRRQNDKTKTPKTKPVSKI. N-linked (GlcNAc...) asparagine glycosylation is present at Asn-47. The next 4 helical transmembrane spans lie at 62 to 82, 89 to 109, 144 to 164, and 179 to 199; these read ILLQ…VLSI, VHPF…FRFL, LNWS…LVAY, and WWAW…FYYY. One can recognise a Fatty acid hydroxylase domain in the interval 189 to 335; sequence LYPIILDFYY…TRIWDRLFGT (147 aa).

The protein belongs to the sterol desaturase family. TMEM195 subfamily.

It is found in the membrane. It participates in secondary metabolite biosynthesis. In terms of biological role, fatty acid hydroxylase; part of the gene cluster that mediates the biosynthesis of verlamelin, a lipopeptide that exhibits antifungal activity against plant pathogenic fungi. Verlamelin is a cyclic hexadepsipeptide and is bridged by ester bonding between a 5-hydroxytetradecanoic acid moiety and a carboxyl group on the terminal Val of amide-bonded tetradecanoyl-hexapeptide D-allo-Thr-D-Ala-L-Pro-L-Gln-D-Tyr-L-Val. VlmA and vlmB are altogether regarded as essential components in the biosynthesis of 5-hydroxytetradecanoic acid. VlmA catalyzes the hydroxylation at position C5 of tetradecanoic acid produced in primary metabolism, while the precise function of vlmB still remains to be solved. To be loaded onto the waiting NRPS, 5-hydroxytetradecanoic acid is activated in the form of acyladenylate by the AMP-dependent ligase vlmC. VlmS seems to accept the fatty-acyl intermediate onto the initial module to further elongate amino acid residues by the downstream modules. In addition, in the last module at its C-terminus, vlmS contains a surplus condensation (C) domain that may be involved in cyclization, the last step to form verlamelin. In Lecanicillium sp, this protein is Fatty acid hydroxylase vlmA.